The sequence spans 56 residues: Botcinic acid biosynthesis cluster B protein 14 (56 aa).

It participates in polyketide biosynthesis. Part of the gene cluster B that mediates the biosynthesis of botcinic acid and its botcinin derivatives, acetate-derived polyketides that contribute to virulence when combined with the sesquiterpene botrydial. Botcinic acid and its derivatives have been shown to induce chlorosis and necrosis during host plant infection, but also have antifungal activities. Two polyketide synthases, BOA6 and BOA9, are involved in the biosynthesis of botcinins. BOA6 mediates the formation of the per-methylated tetraketide core by condensation of four units of malonyl-CoA with one unit of acetyl-CoA, which would be methylated in activated methylene groups to yield a bicyclic acid intermediate that could then either be converted to botrylactone derivatives or lose the starter acetate unit through a retro-Claisen type C-C bond cleavage to yield botcinin derivatives. The second polyketide synthase, BOA9, is probably required for the biosynthesis of the tetraketide side chain of botcinins. The methyltransferase (MT) domain within BOA6 is probably responsible for the incorporation of four methyl groups. The trans-enoyl reductase BOA5 might take over the enoyl reductase function of BOA6 that misses an ER domain. The monooxygenases BOA2, BOA3 and BOA4 might be involved in further hydroxylations at C4, C5 and C8, whereas BOA7, close to BOA9, could potentially be involved in the hydroxylation at C4 in the side chain of botcinins. The polypeptide is Botcinic acid biosynthesis cluster B protein 14 (Botryotinia fuckeliana (strain B05.10) (Noble rot fungus)).